The chain runs to 44 residues: U9-ctenitoxin-Co1a (44 aa).

Intrachain disulfides connect C3/C17, C10/C23, C16/C33, and C25/C31.

As to expression, expressed by the venom gland.

Its subcellular location is the secreted. Functionally, insecticidal neurotoxin that reversibly inhibits the N-methyl-D-aspartate (NMDA)-subtype of ionotropic glutamate receptor (GRIN) and inhibits inactivation of insect sodium channels (Nav). In vivo, is highly toxic to insects. This chain is U9-ctenitoxin-Co1a, found in Ctenus ornatus (Brazilian spider).